The following is a 178-amino-acid chain: Transcription termination/antitermination protein NusG (178 aa).

In terms of domain architecture, KOW spans 130–159 (SVKVKEGPFANFIGTIEEIQLDKRKLKVHV).

Belongs to the NusG family.

Participates in transcription elongation, termination and antitermination. In Halalkalibacterium halodurans (strain ATCC BAA-125 / DSM 18197 / FERM 7344 / JCM 9153 / C-125) (Bacillus halodurans), this protein is Transcription termination/antitermination protein NusG.